A 377-amino-acid chain; its full sequence is Anhydro-N-acetylmuramic acid kinase (377 aa).

12 to 19 (GTSLDGID) is an ATP binding site.

It belongs to the anhydro-N-acetylmuramic acid kinase family.

The enzyme catalyses 1,6-anhydro-N-acetyl-beta-muramate + ATP + H2O = N-acetyl-D-muramate 6-phosphate + ADP + H(+). The protein operates within amino-sugar metabolism; 1,6-anhydro-N-acetylmuramate degradation. It functions in the pathway cell wall biogenesis; peptidoglycan recycling. Its function is as follows. Catalyzes the specific phosphorylation of 1,6-anhydro-N-acetylmuramic acid (anhMurNAc) with the simultaneous cleavage of the 1,6-anhydro ring, generating MurNAc-6-P. Is required for the utilization of anhMurNAc either imported from the medium or derived from its own cell wall murein, and thus plays a role in cell wall recycling. The sequence is that of Anhydro-N-acetylmuramic acid kinase from Methylorubrum extorquens (strain CM4 / NCIMB 13688) (Methylobacterium extorquens).